The sequence spans 270 residues: Endonuclease 4 (270 aa).

Zn(2+)-binding residues include His69, His108, Glu139, Asp169, His172, His204, Asp217, His219, and Glu248.

This sequence belongs to the AP endonuclease 2 family. Zn(2+) is required as a cofactor.

The enzyme catalyses Endonucleolytic cleavage to 5'-phosphooligonucleotide end-products.. In terms of biological role, endonuclease IV plays a role in DNA repair. It cleaves phosphodiester bonds at apurinic or apyrimidinic (AP) sites, generating a 3'-hydroxyl group and a 5'-terminal sugar phosphate. In addition, possesses a 3'-5' exonuclease activity. This Thermus thermophilus (strain ATCC BAA-163 / DSM 7039 / HB27) protein is Endonuclease 4.